The chain runs to 336 residues: MVSYVPEIPLREPVTVEKKKSFPQQKSGLHPRNRHRSRYDFPALIASCPALEPFVKPNAWGDISVDFADPAAVKMLNRALLQHFYGIEHWDIPADYLCPPIPGRADYLHHLADLLATSNDGEIPRGKGVAILDVGIGANCIYPIVGLREYGWRFTGSEIDPVSLNSAKMIVEMNPTLRNSVRLRLQKQPEFIFNGIIGVAEKFDATLCNPPFHGSEQEAQASTRRKLHKLGKGEVADKPVQNFGGKNNELWCEGGEEAFVRKMVEESVSKAQNCLWFTSLISKHTTLPSIYHAAKLAGVAEVRTIEMAQGQKISRFVAWTFHDAEQQAAWAAERWR.

It belongs to the methyltransferase superfamily. METTL16/RlmF family.

The protein resides in the cytoplasm. It catalyses the reaction adenosine(1618) in 23S rRNA + S-adenosyl-L-methionine = N(6)-methyladenosine(1618) in 23S rRNA + S-adenosyl-L-homocysteine + H(+). Specifically methylates the adenine in position 1618 of 23S rRNA. The polypeptide is Ribosomal RNA large subunit methyltransferase F (Serratia proteamaculans (strain 568)).